The primary structure comprises 356 residues: Heat-inducible transcription repressor HrcA (356 aa).

The protein belongs to the HrcA family.

In terms of biological role, negative regulator of class I heat shock genes (grpE-dnaK-dnaJ and groELS operons). Prevents heat-shock induction of these operons. The polypeptide is Heat-inducible transcription repressor HrcA (Gluconobacter oxydans (strain 621H) (Gluconobacter suboxydans)).